Reading from the N-terminus, the 158-residue chain is NADH-quinone oxidoreductase subunit B (158 aa).

Positions 37, 38, 102, and 132 each coordinate [4Fe-4S] cluster.

This sequence belongs to the complex I 20 kDa subunit family. NDH-1 is composed of 14 different subunits. Subunits NuoB, C, D, E, F, and G constitute the peripheral sector of the complex. It depends on [4Fe-4S] cluster as a cofactor.

The protein resides in the cell inner membrane. The enzyme catalyses a quinone + NADH + 5 H(+)(in) = a quinol + NAD(+) + 4 H(+)(out). In terms of biological role, NDH-1 shuttles electrons from NADH, via FMN and iron-sulfur (Fe-S) centers, to quinones in the respiratory chain. Couples the redox reaction to proton translocation (for every two electrons transferred, four hydrogen ions are translocated across the cytoplasmic membrane), and thus conserves the redox energy in a proton gradient. In Dechloromonas aromatica (strain RCB), this protein is NADH-quinone oxidoreductase subunit B.